We begin with the raw amino-acid sequence, 122 residues long: Probable glycine cleavage system H protein (122 aa).

The 82-residue stretch at 23–104 (IATVGITDYA…PYGNWLVKMK (82 aa)) folds into the Lipoyl-binding domain. Residue Lys-64 is modified to N6-lipoyllysine.

The protein belongs to the GcvH family. As to quaternary structure, the glycine cleavage system is composed of four proteins: P, T, L and H. (R)-lipoate serves as cofactor.

Its function is as follows. The glycine cleavage system catalyzes the degradation of glycine. The H protein shuttles the methylamine group of glycine from the P protein to the T protein. The sequence is that of Probable glycine cleavage system H protein from Thermoplasma volcanium (strain ATCC 51530 / DSM 4299 / JCM 9571 / NBRC 15438 / GSS1).